Reading from the N-terminus, the 501-residue chain is Zinc finger C3HC-type protein 1 (501 aa).

At Ala-2 the chain carries N-acetylalanine. A disordered region spans residues 21 to 73 (VVRSPEGTPQKVRELIDEGIVPEEGGTEPKDTAATFQSVDGSPQAEQSPLEST). The residue at position 24 (Ser-24) is a Phosphoserine. Thr-28 bears the Phosphothreonine mark. Over residues 54-72 (ATFQSVDGSPQAEQSPLES) the composition is skewed to polar residues. Residues Ser-58, Ser-62, and Ser-68 each carry the phosphoserine modification. A Phosphothreonine modification is found at Thr-84. A C3HC-type zinc finger spans residues 102–156 (CAKYGWVTVECDMLKCSSCQAFLCASLQPTFDFGRYKERCAELKKSLCSAHEKFC). Residues 302-421 (SPIPGVEGRP…TSPRSFFDPT (120 aa)) form a disordered region. Phosphoserine is present on residues Ser-320 and Ser-328. The segment covering 326-338 (TRSQDATVSPGSE) has biased composition (polar residues). The residue at position 332 (Thr-332) is a Phosphothreonine. Phosphoserine occurs at positions 334, 337, 343, 353, 358, 369, and 380. Polar residues-rich tracts occupy residues 350 to 359 (RTRSWESSSP) and 369 to 383 (SPTT…SMGT). Residue Thr-383 is modified to Phosphothreonine. The residue at position 394 (Ser-394) is a Phosphoserine. The Nuclear localization signal motif lies at 395–401 (PLRRTKR). Residues Ser-406 and Ser-482 each carry the phosphoserine modification. Residues 406-420 (SSSSSDTSPRSFFDP) are compositionally biased toward low complexity.

As to quaternary structure, interacts with TPR; this interaction mediates ZC3HC1 nuclear envelopes (NE)-association but also required for proper positioning of a substantial amount of TPR at the nuclear basket (NB). Post-translationally, phosphorylated. May also be weakly phosphorylated on Tyr residues.

It is found in the nucleus. It localises to the nucleus envelope. Required for proper positioning of a substantial amount of TPR at the nuclear basket (NB) through interaction with TPR. This Mus musculus (Mouse) protein is Zinc finger C3HC-type protein 1 (Zc3hc1).